A 422-amino-acid chain; its full sequence is 26S proteasome non-ATPase regulatory subunit 11B (422 aa).

One can recognise a PCI domain in the interval 228 to 392; the sequence is AYSYFFEAFE…DVLIIFEEPP (165 aa).

Belongs to the proteasome subunit S9 family. In terms of assembly, component of the lid subcomplex of the 19S proteasome regulatory particle complex (also named PA700 complex). The 26S proteasome consists of a 20S proteasome core and two 19S regulatory subunits.

It localises to the nucleus. The protein localises to the cytoplasm. The protein resides in the cytosol. Component of the lid subcomplex of the 26S proteasome, a multiprotein complex involved in the ATP-dependent degradation of ubiquitinated proteins. In the complex, psmd11b is required for proteasome assembly. This Danio rerio (Zebrafish) protein is 26S proteasome non-ATPase regulatory subunit 11B (psmd11b).